The sequence spans 443 residues: C4-dicarboxylate transport protein (443 aa).

10 helical membrane passes run 10-30 (SLYF…HFYP), 46-66 (LIKM…IAGM), 78-98 (YALL…LIVV), 130-150 (SIVG…FANG), 152-172 (ILQV…LGAY), 199-219 (PLGA…GSLV), 224-244 (LMIC…GAIC), 291-311 (VVGL…SIYL), 332-352 (ITLL…TGSG), and 354-374 (IVLA…LALI). Positions 415–443 (ELASGGRPITDTRETDDLGVAEGPAPSIK) are disordered.

It belongs to the dicarboxylate/amino acid:cation symporter (DAACS) (TC 2.A.23) family.

The protein resides in the cell inner membrane. Its function is as follows. Responsible for the transport of dicarboxylates such as succinate, fumarate, and malate from the periplasm across the membrane. The protein is C4-dicarboxylate transport protein of Pseudomonas fluorescens (strain ATCC BAA-477 / NRRL B-23932 / Pf-5).